A 288-amino-acid polypeptide reads, in one-letter code: MKKLSFQQIILTLQNYWQDYGCAILQPYDAHVGAGTFHPATVLRCLGTKPWSVAYVQPSRRPGDSRYGMHPNRMQHYYQFQVILKPSPDNIQDLYLKSLECLGLDLKTHDIRFVEDDWESPTLGAAGLGWEVWCNGMEVSQFTYMQQIGGIECRPVAGEITYGLERLALYIQGVDEVKELDWNGQVGEKALKYGKVDFEAERQFSKYNLELADSEMLVRHFKDSEEQCEWLVKKNVPFAAYDECLKASHAFNQLNALGVISVTERASYVLRVRHLAKICCTKWLEMNE.

This sequence belongs to the class-II aminoacyl-tRNA synthetase family. In terms of assembly, tetramer of two alpha and two beta subunits.

The protein resides in the cytoplasm. The enzyme catalyses tRNA(Gly) + glycine + ATP = glycyl-tRNA(Gly) + AMP + diphosphate. The polypeptide is Glycine--tRNA ligase alpha subunit (Rickettsia canadensis (strain McKiel)).